Here is a 196-residue protein sequence, read N- to C-terminus: Zinc finger C2H2 protein ECU03_0940 (196 aa).

2 C2H2-type zinc fingers span residues tyrosine 130 to histidine 155 and tyrosine 166 to histidine 191.

The sequence is that of Zinc finger C2H2 protein ECU03_0940 from Encephalitozoon cuniculi (strain GB-M1) (Microsporidian parasite).